Here is a 110-residue protein sequence, read N- to C-terminus: Large ribosomal subunit protein uL22 (110 aa).

This sequence belongs to the universal ribosomal protein uL22 family. Part of the 50S ribosomal subunit.

In terms of biological role, this protein binds specifically to 23S rRNA; its binding is stimulated by other ribosomal proteins, e.g. L4, L17, and L20. It is important during the early stages of 50S assembly. It makes multiple contacts with different domains of the 23S rRNA in the assembled 50S subunit and ribosome. Its function is as follows. The globular domain of the protein is located near the polypeptide exit tunnel on the outside of the subunit, while an extended beta-hairpin is found that lines the wall of the exit tunnel in the center of the 70S ribosome. In Acinetobacter baumannii (strain ACICU), this protein is Large ribosomal subunit protein uL22.